We begin with the raw amino-acid sequence, 158 residues long: Transcription elongation factor GreA (158 aa).

Residues 48 to 75 (NSEYDSAKEDQAFVEGRIAQLEKMIRNA) adopt a coiled-coil conformation.

The protein belongs to the GreA/GreB family.

In terms of biological role, necessary for efficient RNA polymerase transcription elongation past template-encoded arresting sites. The arresting sites in DNA have the property of trapping a certain fraction of elongating RNA polymerases that pass through, resulting in locked ternary complexes. Cleavage of the nascent transcript by cleavage factors such as GreA or GreB allows the resumption of elongation from the new 3'terminus. GreA releases sequences of 2 to 3 nucleotides. The chain is Transcription elongation factor GreA from Shouchella clausii (strain KSM-K16) (Alkalihalobacillus clausii).